Reading from the N-terminus, the 204-residue chain is Molybdenum cofactor guanylyltransferase (204 aa).

GTP contacts are provided by residues 12–14, K25, N53, D71, and D101; that span reads LAG. Position 101 (D101) interacts with Mg(2+).

Belongs to the MobA family. Monomer. Mg(2+) serves as cofactor.

It localises to the cytoplasm. It carries out the reaction Mo-molybdopterin + GTP + H(+) = Mo-molybdopterin guanine dinucleotide + diphosphate. Functionally, transfers a GMP moiety from GTP to Mo-molybdopterin (Mo-MPT) cofactor (Moco or molybdenum cofactor) to form Mo-molybdopterin guanine dinucleotide (Mo-MGD) cofactor. In Ralstonia pickettii (strain 12J), this protein is Molybdenum cofactor guanylyltransferase.